An 83-amino-acid chain; its full sequence is Neurotoxin LmNaTx34.5 (83 aa).

The signal sequence occupies residues 1 to 15 (FILVVIALMVIEVKS). Residues 16–82 (DGYLMVRAGR…IWTYEKNTCS (67 aa)) enclose the LCN-type CS-alpha/beta domain. Disulfide bonds link Cys-29–Cys-81, Cys-33–Cys-54, Cys-40–Cys-61, and Cys-44–Cys-63.

It belongs to the long (4 C-C) scorpion toxin superfamily. Sodium channel inhibitor family. Beta subfamily. In terms of tissue distribution, expressed by the venom gland.

It localises to the secreted. In terms of biological role, binds voltage-independently at site-4 of sodium channels (Nav) and shift the voltage of activation toward more negative potentials thereby affecting sodium channel activation and promoting spontaneous and repetitive firing. This chain is Neurotoxin LmNaTx34.5, found in Lychas mucronatus (Chinese swimming scorpion).